We begin with the raw amino-acid sequence, 194 residues long: Adenine phosphoribosyltransferase (194 aa).

The protein belongs to the purine/pyrimidine phosphoribosyltransferase family. In terms of assembly, homodimer.

The protein resides in the cytoplasm. The enzyme catalyses AMP + diphosphate = 5-phospho-alpha-D-ribose 1-diphosphate + adenine. It participates in purine metabolism; AMP biosynthesis via salvage pathway; AMP from adenine: step 1/1. Its function is as follows. Catalyzes a salvage reaction resulting in the formation of AMP, that is energically less costly than de novo synthesis. The chain is Adenine phosphoribosyltransferase from Albidiferax ferrireducens (strain ATCC BAA-621 / DSM 15236 / T118) (Rhodoferax ferrireducens).